Reading from the N-terminus, the 489-residue chain is L-asparagine permease 1 (489 aa).

A run of 12 helical transmembrane segments spans residues 25-45 (QLQM…GASG), 49-69 (KAGP…FLIL), 100-120 (AVGW…TTAI), 137-157 (ILAL…VEWF), 162-182 (FWAA…GTVF), 210-230 (WLPL…VELV), 255-275 (IAIF…YTAY), 289-309 (IGFH…ALSS), 344-364 (YGGI…NAFK), 369-389 (FEIV…TIVL), 413-433 (SPYS…TMAS), and 439-459 (TWTV…WYLV).

Belongs to the amino acid-polyamine-organocation (APC) superfamily. Amino acid transporter (AAT) (TC 2.A.3.1) family.

It is found in the cell membrane. The protein is L-asparagine permease 1 (ansP1) of Mycobacterium bovis (strain ATCC BAA-935 / AF2122/97).